Reading from the N-terminus, the 281-residue chain is Probable endonuclease 4 (281 aa).

Zn(2+)-binding residues include His69, His109, Glu145, Asp179, His182, His216, Asp229, His231, and Glu261.

The protein belongs to the AP endonuclease 2 family. The cofactor is Zn(2+).

It carries out the reaction Endonucleolytic cleavage to 5'-phosphooligonucleotide end-products.. Endonuclease IV plays a role in DNA repair. It cleaves phosphodiester bonds at apurinic or apyrimidinic (AP) sites, generating a 3'-hydroxyl group and a 5'-terminal sugar phosphate. The chain is Probable endonuclease 4 from Buchnera aphidicola subsp. Acyrthosiphon pisum (strain APS) (Acyrthosiphon pisum symbiotic bacterium).